A 300-amino-acid chain; its full sequence is Ribosomal protein L11 methyltransferase (300 aa).

S-adenosyl-L-methionine-binding residues include Thr152, Gly173, Asp195, and Asn234.

Belongs to the methyltransferase superfamily. PrmA family.

It is found in the cytoplasm. The catalysed reaction is L-lysyl-[protein] + 3 S-adenosyl-L-methionine = N(6),N(6),N(6)-trimethyl-L-lysyl-[protein] + 3 S-adenosyl-L-homocysteine + 3 H(+). In terms of biological role, methylates ribosomal protein L11. The polypeptide is Ribosomal protein L11 methyltransferase (Cupriavidus necator (strain ATCC 17699 / DSM 428 / KCTC 22496 / NCIMB 10442 / H16 / Stanier 337) (Ralstonia eutropha)).